Reading from the N-terminus, the 1124-residue chain is Angiopoietin-1 receptor (1124 aa).

The N-terminal stretch at 1-22 (MDSLASLVLCGVSLLLSGTVEG) is a signal peptide. Over 23 to 748 (AMDLILINSL…ADLGGGKMLL (726 aa)) the chain is Extracellular. The cysteines at positions 44 and 102 are disulfide-linked. In terms of domain architecture, Ig-like C2-type 1 spans 44–123 (CIASGWRPHE…RTMKMRQQAS (80 aa)). 2 N-linked (GlcNAc...) asparagine glycosylation sites follow: Asn140 and Asn158. EGF-like domains follow at residues 210–252 (RCEA…RTCE), 254–299 (ACEL…LQCN), and 301–341 (ACHP…LQCE). 13 disulfides stabilise this stretch: Cys211–Cys220, Cys224–Cys233, Cys227–Cys240, Cys242–Cys251, Cys255–Cys264, Cys268–Cys274, Cys280–Cys287, Cys289–Cys298, Cys302–Cys311, Cys315–Cys323, Cys317–Cys329, Cys331–Cys340, and Cys370–Cys424. Residues 350–440 (PKIVDLPDHI…GMVEKPFNIS (91 aa)) form the Ig-like C2-type 2 domain. N-linked (GlcNAc...) asparagine glycosylation is found at Asn399, Asn438, Asn464, Asn560, Asn596, Asn649, and Asn691. 3 consecutive Fibronectin type-III domains span residues 447–541 (PLNA…TASI), 545–636 (PPRG…TLSD), and 641–735 (QPEN…LPES). The helical transmembrane segment at 749–769 (IAILGSAGMTCLTVLLAFLII) threads the bilayer. Over 770–1124 (LQLKRANVQR…GIDCSAEEAA (355 aa)) the chain is Cytoplasmic. Residues 824–1096 (IKFQDVIGEG…QILVSLNRML (273 aa)) form the Protein kinase domain. Residues 830–838 (IGEGNFGQV) and Lys855 contribute to the ATP site. Tyr860 is subject to Phosphotyrosine; by autocatalysis. Catalysis depends on Asp964, which acts as the Proton acceptor. A phosphotyrosine; by autocatalysis mark is found at Tyr992, Tyr1102, and Tyr1108.

Belongs to the protein kinase superfamily. Tyr protein kinase family. Tie subfamily. Homodimer. Heterodimer with TIE1. Interacts with ANGPT1, ANGPT2 and ANGPT4. At cell-cell contacts in quiescent cells, forms a signaling complex composed of ANGPT1 plus TEK molecules from two adjoining cells. In the absence of endothelial cell-cell contacts, interaction with ANGPT1 mediates contacts with the extracellular matrix. Interacts with PTPRB; this promotes endothelial cell-cell adhesion. Interacts with DOK2, GRB2, GRB7, GRB14, PIK3R1 and PTPN11/SHP2. Colocalizes with DOK2 at contacts with the extracellular matrix in migrating cells. Interacts (tyrosine phosphorylated) with TNIP2. Interacts (tyrosine phosphorylated) with SHC1 (via SH2 domain). Post-translationally, proteolytic processing leads to the shedding of the extracellular domain (soluble TIE-2 alias sTIE-2). Autophosphorylated on tyrosine residues in response to ligand binding. Autophosphorylation occurs in trans, i.e. one subunit of the dimeric receptor phosphorylates tyrosine residues on the other subunit. Autophosphorylation occurs in a sequential manner, where Tyr-992 in the kinase activation loop is phosphorylated first, followed by autophosphorylation at Tyr-1108 and at additional tyrosine residues. ANGPT1-induced phosphorylation is impaired during hypoxia, due to increased expression of ANGPT2. Phosphorylation is important for interaction with GRB14, PIK3R1 and PTPN11. Phosphorylation at Tyr-1102 is important for interaction with SHC1, GRB2 and GRB7. Phosphorylation at Tyr-1108 is important for interaction with DOK2 and for coupling to downstream signal transduction pathways in endothelial cells. Dephosphorylated by PTPRB. In terms of processing, ubiquitinated. The phosphorylated receptor is ubiquitinated and internalized, leading to its degradation. As to expression, detected in umbilical vein endothelial cells. Proteolytic processing gives rise to a soluble extracellular domain that is detected in blood plasma (at protein level). Predominantly expressed in endothelial cells and their progenitors, the angioblasts. Has been directly found in placenta and lung, with a lower level in umbilical vein endothelial cells, brain and kidney.

It localises to the cell membrane. The protein localises to the cell junction. The protein resides in the focal adhesion. Its subcellular location is the cytoplasm. It is found in the cytoskeleton. It localises to the secreted. It carries out the reaction L-tyrosyl-[protein] + ATP = O-phospho-L-tyrosyl-[protein] + ADP + H(+). Its activity is regulated as follows. Angiopoietin binding leads to receptor dimerization and activation by autophosphorylation at Tyr-992 on the kinase activation loop. Inhibited by staurosporine, K252a, PP2, damnacanthal, SB203580, CEP-11207, CEP-11981 and CE-245677. Inhibited by triazine, thienopyrimidine and thiazolopyrimidine derivatives. Functionally, tyrosine-protein kinase that acts as a cell-surface receptor for ANGPT1, ANGPT2 and ANGPT4 and regulates angiogenesis, endothelial cell survival, proliferation, migration, adhesion and cell spreading, reorganization of the actin cytoskeleton, but also maintenance of vascular quiescence. Has anti-inflammatory effects by preventing the leakage of pro-inflammatory plasma proteins and leukocytes from blood vessels. Required for normal angiogenesis and heart development during embryogenesis. Required for post-natal hematopoiesis. After birth, activates or inhibits angiogenesis, depending on the context. Inhibits angiogenesis and promotes vascular stability in quiescent vessels, where endothelial cells have tight contacts. In quiescent vessels, ANGPT1 oligomers recruit TEK to cell-cell contacts, forming complexes with TEK molecules from adjoining cells, and this leads to preferential activation of phosphatidylinositol 3-kinase and the AKT1 signaling cascades. In migrating endothelial cells that lack cell-cell adhesions, ANGT1 recruits TEK to contacts with the extracellular matrix, leading to the formation of focal adhesion complexes, activation of PTK2/FAK and of the downstream kinases MAPK1/ERK2 and MAPK3/ERK1, and ultimately to the stimulation of sprouting angiogenesis. ANGPT1 signaling triggers receptor dimerization and autophosphorylation at specific tyrosine residues that then serve as binding sites for scaffold proteins and effectors. Signaling is modulated by ANGPT2 that has lower affinity for TEK, can promote TEK autophosphorylation in the absence of ANGPT1, but inhibits ANGPT1-mediated signaling by competing for the same binding site. Signaling is also modulated by formation of heterodimers with TIE1, and by proteolytic processing that gives rise to a soluble TEK extracellular domain. The soluble extracellular domain modulates signaling by functioning as decoy receptor for angiopoietins. TEK phosphorylates DOK2, GRB7, GRB14, PIK3R1; SHC1 and TIE1. The polypeptide is Angiopoietin-1 receptor (Homo sapiens (Human)).